Here is a 159-residue protein sequence, read N- to C-terminus: Regulator of G-protein signaling 13 (159 aa).

The RGS domain occupies 34 to 150 (SFENLMATKY…LKSEMYQKLL (117 aa)).

Its function is as follows. Inhibits signal transduction by increasing the GTPase activity of G protein alpha subunits thereby driving them into their inactive GDP-bound form. Binds to both G(i)-alpha and G(q)-alpha. This is Regulator of G-protein signaling 13 (RGS13) from Homo sapiens (Human).